A 598-amino-acid polypeptide reads, in one-letter code: Pescadillo homolog (598 aa).

Residues 296-317 (QAMKADSKDKDDNSNDEAPENV) are disordered. Residues 345–439 (PTATLFEDFV…ELLSANLYLP (95 aa)) enclose the BRCT domain. Disordered stretches follow at residues 452–501 (DALG…EDVE), 515–544 (GIAY…EDEE), and 564–598 (MKYS…VEKK). The span at 463-485 (ESEDESSDSSEESDSEIENEEED) shows a compositional bias: acidic residues. Basic and acidic residues-rich tracts occupy residues 520–532 (KAKD…DVAS), 570–579 (QKEDKIEELK), and 586–598 (AKKE…VEKK). Residues 557-598 (QRKLYKKMKYSNQQKEDKIEELKKKKKQLAKKEKTLKKVEKK) adopt a coiled-coil conformation.

It belongs to the pescadillo family. As to quaternary structure, component of the NOP7 complex, composed of ERB1, NOP7 and YTM1. The complex is held together by ERB1, which interacts with NOP7 via its N-terminal domain and with YTM1 via a high-affinity interaction between the seven-bladed beta-propeller domains of the 2 proteins. The NOP7 complex associates with the 66S pre-ribosome.

It is found in the nucleus. The protein localises to the nucleolus. It localises to the nucleoplasm. In terms of biological role, component of the NOP7 complex, which is required for maturation of the 25S and 5.8S ribosomal RNAs and formation of the 60S ribosome. The protein is Pescadillo homolog of Candida glabrata (strain ATCC 2001 / BCRC 20586 / JCM 3761 / NBRC 0622 / NRRL Y-65 / CBS 138) (Yeast).